Consider the following 208-residue polypeptide: uncharacterized protein (208 aa).

A run of 6 helical transmembrane segments spans residues 5-25 (VIGI…KEAW), 41-61 (MLLI…IAAL), 69-89 (ANGI…LFFL), 123-143 (VLLG…ICGL), 150-170 (VFFF…TIAG), and 176-196 (NKLL…LVIY).

The protein resides in the cell membrane. This is an uncharacterized protein from Bacillus subtilis (strain 168).